The chain runs to 360 residues: Fe(3+) ions import ATP-binding protein FbpC (360 aa).

Residues 4-236 (LEIKGLHKHY…PKDRMIAEFL (233 aa)) form the ABC transporter domain. Residue 36–43 (GPSGCGKT) participates in ATP binding.

This sequence belongs to the ABC transporter superfamily. Fe(3+) ion importer (TC 3.A.1.10) family. The complex is composed of two ATP-binding proteins (FbpC), two transmembrane proteins (FbpB) and a solute-binding protein (FbpA).

The protein localises to the cell inner membrane. It carries out the reaction Fe(3+)(out) + ATP + H2O = Fe(3+)(in) + ADP + phosphate + H(+). Functionally, part of the ABC transporter complex FbpABC involved in Fe(3+) ions import. Responsible for energy coupling to the transport system. The sequence is that of Fe(3+) ions import ATP-binding protein FbpC from Mesorhizobium japonicum (strain LMG 29417 / CECT 9101 / MAFF 303099) (Mesorhizobium loti (strain MAFF 303099)).